The primary structure comprises 545 residues: Chaperonin GroEL 3 (545 aa).

Residues 29–32 (TLGP), 86–90 (DGTTT), Gly413, 479–481 (DAV), and Asp495 each bind ATP. Positions 526–545 (DKQAKAPAGVGPGPGEGFDY) are disordered. The span at 535–545 (VGPGPGEGFDY) shows a compositional bias: gly residues.

Belongs to the chaperonin (HSP60) family. In terms of assembly, forms a cylinder of 14 subunits composed of two heptameric rings stacked back-to-back. Interacts with the co-chaperonin GroES.

The protein resides in the cytoplasm. The catalysed reaction is ATP + H2O + a folded polypeptide = ADP + phosphate + an unfolded polypeptide.. Together with its co-chaperonin GroES, plays an essential role in assisting protein folding. The GroEL-GroES system forms a nano-cage that allows encapsulation of the non-native substrate proteins and provides a physical environment optimized to promote and accelerate protein folding. This chain is Chaperonin GroEL 3, found in Trichormus variabilis (strain ATCC 29413 / PCC 7937) (Anabaena variabilis).